The primary structure comprises 524 residues: Glucose-6-phosphate isomerase (524 aa).

Glutamate 346 (proton donor) is an active-site residue. Residues histidine 377 and lysine 492 contribute to the active site.

Belongs to the GPI family.

The protein localises to the cytoplasm. The catalysed reaction is alpha-D-glucose 6-phosphate = beta-D-fructose 6-phosphate. The protein operates within carbohydrate biosynthesis; gluconeogenesis. Its pathway is carbohydrate degradation; glycolysis; D-glyceraldehyde 3-phosphate and glycerone phosphate from D-glucose: step 2/4. In terms of biological role, catalyzes the reversible isomerization of glucose-6-phosphate to fructose-6-phosphate. This chain is Glucose-6-phosphate isomerase, found in Chlamydia trachomatis serovar A (strain ATCC VR-571B / DSM 19440 / HAR-13).